Consider the following 345-residue polypeptide: Phosphate acyltransferase (345 aa).

It belongs to the PlsX family. In terms of assembly, homodimer. Probably interacts with PlsY.

The protein localises to the cytoplasm. The catalysed reaction is a fatty acyl-[ACP] + phosphate = an acyl phosphate + holo-[ACP]. Its pathway is lipid metabolism; phospholipid metabolism. Catalyzes the reversible formation of acyl-phosphate (acyl-PO(4)) from acyl-[acyl-carrier-protein] (acyl-ACP). This enzyme utilizes acyl-ACP as fatty acyl donor, but not acyl-CoA. The chain is Phosphate acyltransferase from Trichlorobacter lovleyi (strain ATCC BAA-1151 / DSM 17278 / SZ) (Geobacter lovleyi).